Reading from the N-terminus, the 291-residue chain is 4-hydroxy-tetrahydrodipicolinate synthase (291 aa).

Residue Thr-44 participates in pyruvate binding. Tyr-132 acts as the Proton donor/acceptor in catalysis. Lys-160 serves as the catalytic Schiff-base intermediate with substrate. Val-202 serves as a coordination point for pyruvate.

The protein belongs to the DapA family. In terms of assembly, homotetramer; dimer of dimers.

The protein localises to the cytoplasm. It catalyses the reaction L-aspartate 4-semialdehyde + pyruvate = (2S,4S)-4-hydroxy-2,3,4,5-tetrahydrodipicolinate + H2O + H(+). It functions in the pathway amino-acid biosynthesis; L-lysine biosynthesis via DAP pathway; (S)-tetrahydrodipicolinate from L-aspartate: step 3/4. In terms of biological role, catalyzes the condensation of (S)-aspartate-beta-semialdehyde [(S)-ASA] and pyruvate to 4-hydroxy-tetrahydrodipicolinate (HTPA). The sequence is that of 4-hydroxy-tetrahydrodipicolinate synthase from Clostridium perfringens (strain ATCC 13124 / DSM 756 / JCM 1290 / NCIMB 6125 / NCTC 8237 / Type A).